We begin with the raw amino-acid sequence, 431 residues long: Histidine--tRNA ligase (431 aa).

It belongs to the class-II aminoacyl-tRNA synthetase family. Homodimer.

It localises to the cytoplasm. It carries out the reaction tRNA(His) + L-histidine + ATP = L-histidyl-tRNA(His) + AMP + diphosphate + H(+). This is Histidine--tRNA ligase from Finegoldia magna (strain ATCC 29328 / DSM 20472 / WAL 2508) (Peptostreptococcus magnus).